The primary structure comprises 126 residues: Cystatin-C (126 aa).

The first 18 residues, 1 to 18 (MKMLVFPVLAALFAVGLG), serve as a signal peptide directing secretion. The Cystatin domain maps to 22-115 (GAPRDINISE…CTFSVWSRPW (94 aa)). The Secondary area of contact signature appears at 64–68 (QVVSG). 2 disulfides stabilise this stretch: C82–C92 and C106–C126.

It belongs to the cystatin family. Ubiquitously expressed in normal tissues including brain, eye, gill, heart, gullet, liver, spleen, stomach, pyloric ceca, intestine, kidney and muscle. Expressed, but not up-regulated, in lipopolysaccharide (LPS)-stimulated tissues including kidney, spleen, muscle and gill.

The protein resides in the secreted. In terms of biological role, thiol protease inhibitor. Has high papain inhibitory activity and inhibits to a lesser extent fish cathepsins L, S, K, F, X and bovine cathepsin B in vitro. The polypeptide is Cystatin-C (Paralichthys olivaceus (Bastard halibut)).